The primary structure comprises 465 residues: Ribulose bisphosphate carboxylase large chain (465 aa).

Residue Lys4 is modified to N6,N6,N6-trimethyllysine. The substrate site is built by Asn113 and Thr163. Residue Lys165 is the Proton acceptor of the active site. Position 167 (Lys167) interacts with substrate. Mg(2+) contacts are provided by Lys191, Asp193, and Glu194. Lys191 is modified (N6-carboxylysine). His284 acts as the Proton acceptor in catalysis. Substrate is bound by residues Arg285, His317, and Ser369.

The protein belongs to the RuBisCO large chain family. Type I subfamily. Heterohexadecamer of 8 large chains and 8 small chains; disulfide-linked. The disulfide link is formed within the large subunit homodimers. Mg(2+) serves as cofactor. In terms of processing, the disulfide bond which can form in the large chain dimeric partners within the hexadecamer appears to be associated with oxidative stress and protein turnover.

It localises to the plastid. The protein localises to the chloroplast. It carries out the reaction 2 (2R)-3-phosphoglycerate + 2 H(+) = D-ribulose 1,5-bisphosphate + CO2 + H2O. The catalysed reaction is D-ribulose 1,5-bisphosphate + O2 = 2-phosphoglycolate + (2R)-3-phosphoglycerate + 2 H(+). In terms of biological role, ruBisCO catalyzes two reactions: the carboxylation of D-ribulose 1,5-bisphosphate, the primary event in carbon dioxide fixation, as well as the oxidative fragmentation of the pentose substrate in the photorespiration process. Both reactions occur simultaneously and in competition at the same active site. The polypeptide is Ribulose bisphosphate carboxylase large chain (Cyrilla racemiflora (Swamp titi)).